The chain runs to 352 residues: Molybdenum import ATP-binding protein ModC (352 aa).

An ABC transporter domain is found at 1-229 (MLELNFSQTL…SVMNPWLPKE (229 aa)). 31–38 (GVSGAGKT) lines the ATP pocket. In terms of domain architecture, Mop spans 289-352 (QTSIRNVLRA…AQIKSVSITA (64 aa)).

The protein belongs to the ABC transporter superfamily. Molybdate importer (TC 3.A.1.8) family. In terms of assembly, the complex is composed of two ATP-binding proteins (ModC), two transmembrane proteins (ModB) and a solute-binding protein (ModA).

It localises to the cell inner membrane. It carries out the reaction molybdate(out) + ATP + H2O = molybdate(in) + ADP + phosphate + H(+). Its function is as follows. Part of the ABC transporter complex ModABC involved in molybdenum import. Responsible for energy coupling to the transport system. This is Molybdenum import ATP-binding protein ModC from Shigella boydii serotype 4 (strain Sb227).